The chain runs to 541 residues: Formimidoyltransferase-cyclodeaminase (541 aa).

The tract at residues 1–181 (MSQLVECVPN…GATVAGARKF (181 aa)) is formiminotransferase N-subdomain. The active-site For formimidoyltransferase activity is the H82. 163-172 (GPSAFVPSWG) serves as a coordination point for folate. A formiminotransferase C-subdomain region spans residues 182-326 (LLAFNINLLS…PKERIIEYLV (145 aa)). The linker stretch occupies residues 327-334 (PEAGPEQS). A cyclodeaminase/cyclohydrolase region spans residues 335–541 (LLHKPLRTFV…VLDRLEARQA (207 aa)). D412 acts as the For cyclodeaminase activity in catalysis. S520 is subject to Phosphoserine.

This sequence in the C-terminal section; belongs to the cyclodeaminase/cyclohydrolase family. It in the N-terminal section; belongs to the formiminotransferase family. As to quaternary structure, homooctamer, including four polyglutamate binding sites. The subunits are arranged as a tetramer of dimers, and form a planar ring-shaped structure.

The protein localises to the cytoplasm. It localises to the cytosol. It is found in the golgi apparatus. The protein resides in the cytoskeleton. Its subcellular location is the microtubule organizing center. The protein localises to the centrosome. It localises to the centriole. The enzyme catalyses 5-formimidoyltetrahydrofolate + L-glutamate = N-formimidoyl-L-glutamate + (6S)-5,6,7,8-tetrahydrofolate. The catalysed reaction is 5-formimidoyltetrahydrofolate + 2 H(+) = (6R)-5,10-methenyltetrahydrofolate + NH4(+). It participates in amino-acid degradation; L-histidine degradation into L-glutamate; L-glutamate from N-formimidoyl-L-glutamate (transferase route): step 1/1. In terms of biological role, folate-dependent enzyme, that displays both transferase and deaminase activity. Serves to channel one-carbon units from formiminoglutamate to the folate pool. Functionally, binds and promotes bundling of vimentin filaments originating from the Golgi. In Sus scrofa (Pig), this protein is Formimidoyltransferase-cyclodeaminase (FTCD).